Here is a 543-residue protein sequence, read N- to C-terminus: CTP synthase (543 aa).

Residues 1–265 form an amidoligase domain region; that stretch reads MARYIFITGG…DDEVLAAFGI (265 aa). Position 13 (S13) interacts with CTP. S13 serves as a coordination point for UTP. Residue 14 to 19 coordinates ATP; sequence SLGKGL. Residue Y54 coordinates L-glutamine. D71 serves as a coordination point for ATP. Mg(2+) is bound by residues D71 and E139. CTP is bound by residues 146–148, 186–191, and K222; these read DIE and KTKPTQ. UTP-binding positions include 186–191 and K222; that span reads KTKPTQ. Residue 238–240 participates in ATP binding; sequence RDV. Residues 291–542 form the Glutamine amidotransferase type-1 domain; that stretch reads TIAIVGKYTG…VQAAVVQSRL (252 aa). G353 lines the L-glutamine pocket. Catalysis depends on C380, which acts as the Nucleophile; for glutamine hydrolysis. L-glutamine is bound by residues 381–384, E404, and R470; that span reads FGMQ. Catalysis depends on residues H515 and E517.

It belongs to the CTP synthase family. In terms of assembly, homotetramer.

It catalyses the reaction UTP + L-glutamine + ATP + H2O = CTP + L-glutamate + ADP + phosphate + 2 H(+). The enzyme catalyses L-glutamine + H2O = L-glutamate + NH4(+). It carries out the reaction UTP + NH4(+) + ATP = CTP + ADP + phosphate + 2 H(+). It participates in pyrimidine metabolism; CTP biosynthesis via de novo pathway; CTP from UDP: step 2/2. Allosterically activated by GTP, when glutamine is the substrate; GTP has no effect on the reaction when ammonia is the substrate. The allosteric effector GTP functions by stabilizing the protein conformation that binds the tetrahedral intermediate(s) formed during glutamine hydrolysis. Inhibited by the product CTP, via allosteric rather than competitive inhibition. Functionally, catalyzes the ATP-dependent amination of UTP to CTP with either L-glutamine or ammonia as the source of nitrogen. Regulates intracellular CTP levels through interactions with the four ribonucleotide triphosphates. In Rhodopseudomonas palustris (strain BisB18), this protein is CTP synthase.